The sequence spans 239 residues: Probable plastid-lipid-associated protein 8, chloroplastic (239 aa).

Residues 1-52 (MAATASSLTIASSFSEPRTQIHSSRRLNLPLQYSIPYKVLRSRSRRLGLVVS) constitute a chloroplast transit peptide. N-acetylserine is present on Ser53.

The protein belongs to the PAP/fibrillin family.

It is found in the plastid. It localises to the chloroplast. The sequence is that of Probable plastid-lipid-associated protein 8, chloroplastic (PAP8) from Arabidopsis thaliana (Mouse-ear cress).